Reading from the N-terminus, the 385-residue chain is Trans-enoyl reductase tasC (385 aa).

49–52 (VDTK) is an NADP(+) binding site. A substrate-binding site is contributed by 136-143 (NSWYTVAW). Residues 196–199 (SSST), 219–222 (SARN), and 284–285 (LD) contribute to the NADP(+) site. 305–309 (GPELM) is a substrate binding site. NADP(+) is bound at residue 374 to 375 (VS).

The protein belongs to the zinc-containing alcohol dehydrogenase family. In terms of assembly, monomer.

The catalysed reaction is (2S,4S)-4-hydroxy-4-methylglutamate + 8 malonyl-CoA + 3 S-adenosyl-L-methionine + ATP + 8 NADPH + 11 H(+) = (2S)-3-[(2S)-3,5-dioxo-4-[(2E,4R,6R,8E,10E,12E)-4,6,12-trimethyltetradeca-2,8,10,12-tetraenoyl]pyrrolidin-2-yl]-2-hydroxy-2-methylpropanoate + AMP + 3 S-adenosyl-L-homocysteine + 8 CO2 + diphosphate + 8 NADP(+) + 8 CoA + 6 H2O. It carries out the reaction (2S,4R)-4-hydroxy-4-methylglutamate + 8 malonyl-CoA + 3 S-adenosyl-L-methionine + ATP + 8 NADPH + 11 H(+) = (2R)-3-[(2S)-3,5-dioxo-4-[(2E,4R,6R,8E,10E,12E)-4,6,12-trimethyltetradeca-2,8,10,12-tetraenoyl]pyrrolidin-2-yl]-2-hydroxy-2-methylpropanoate + AMP + 3 S-adenosyl-L-homocysteine + 8 CO2 + diphosphate + 8 NADP(+) + 8 CoA + 6 H2O. The protein operates within secondary metabolite biosynthesis. Its function is as follows. Trans-enoyl reductase; part of the gene cluster that mediates the biosynthesis of the tetramic acids Sch210971 and Sch210972, potential anti-HIV fungal natural product that contain a decalin core. The PKS module of tasS together with the enoylreductase tasC catalyze the formation of the polyketide unit which is then conjugated to 4-hydroxyl-4-methyl glutamate (HMG) by the condensation domain of the tasS NRPS module. One unique structural feature of Sch210971 and Sch210972 is the tetramic acid motif proposed to be derived from the non-proteinogenic amino acid HMG, by a Dieckmann-type condensation catalyzed by the reductase domain of tasS. The aldolase tasA catalyzes the aldol condensation of 2 molecules of pyruvic acid to yield the intermediate 4-hydroxyl-4-methyl-2-oxoglutarate (HMOG), which can then be stereoselectively transaminated, may be by tasG, to form HMG. The Diels-Alderase tas3 then uses the Dieckmann product of tasS as substrate and catalyzes the Diels-Alder cycloaddition to form the decalin ring of Sch210971 and Sch210972. In Hapsidospora irregularis, this protein is Trans-enoyl reductase tasC.